The primary structure comprises 618 residues: Medium-chain acyl-CoA ligase ACSF2, mitochondrial (618 aa).

Residues 1–44 (MRATAAYVGMLRLGRMCAGSPGVLGARAALSRSWQEARLQAVRF) constitute a mitochondrion transit peptide. Residue lysine 182 is modified to N6-acetyllysine. Lysine 185 is modified (N6-acetyllysine; alternate). The residue at position 185 (lysine 185) is an N6-succinyllysine; alternate. Residue 266 to 274 (TSGTTGSPK) coordinates ATP. N6-acetyllysine is present on residues lysine 343 and lysine 401. At lysine 481 the chain carries N6-succinyllysine. ATP-binding residues include aspartate 496 and arginine 511. Residue lysine 513 is modified to N6-acetyllysine. Residues lysine 547 and lysine 573 each carry the N6-acetyllysine; alternate modification. 2 positions are modified to N6-succinyllysine; alternate: lysine 547 and lysine 573. ATP is bound at residue lysine 602. N6-succinyllysine is present on lysine 602.

This sequence belongs to the ATP-dependent AMP-binding enzyme family.

The protein resides in the mitochondrion. The enzyme catalyses a medium-chain fatty acid + ATP + CoA = a medium-chain fatty acyl-CoA + AMP + diphosphate. The catalysed reaction is octanoate + ATP + CoA = octanoyl-CoA + AMP + diphosphate. Acyl-CoA synthases catalyze the initial reaction in fatty acid metabolism, by forming a thioester with CoA. Has some preference toward medium-chain substrates. Plays a role in adipocyte differentiation. This chain is Medium-chain acyl-CoA ligase ACSF2, mitochondrial, found in Macaca fascicularis (Crab-eating macaque).